The chain runs to 170 residues: Cytochrome b6-f complex subunit 4 (170 aa).

3 helical membrane-spanning segments follow: residues L36–V56, L95–E115, and T131–I151.

Belongs to the cytochrome b family. PetD subfamily. As to quaternary structure, the 4 large subunits of the cytochrome b6-f complex are cytochrome b6, subunit IV (17 kDa polypeptide, petD), cytochrome f and the Rieske protein, while the 4 small subunits are petG, petL, petM and petN. The complex functions as a dimer.

The protein resides in the plastid. It is found in the chloroplast thylakoid membrane. Its function is as follows. Component of the cytochrome b6-f complex, which mediates electron transfer between photosystem II (PSII) and photosystem I (PSI), cyclic electron flow around PSI, and state transitions. The polypeptide is Cytochrome b6-f complex subunit 4 (Nymphaea alba (White water-lily)).